A 787-amino-acid chain; its full sequence is Filamentous growth regulator 27 (787 aa).

Residues 1 to 22 form a disordered region; that stretch reads MSAPIVETKKASKRRIRRIPDD. The segment at residues 31 to 57 is a DNA-binding region (zn(2)-C6 fungal-type); that stretch reads CDNCKKRKFKCSGEKPCFECSKKGHDC. The stretch at 69 to 97 forms a coiled coil; that stretch reads GERMAKLKQKKDNNEKQRELVNEQIAQSS. Disordered regions lie at residues 120-140 and 200-221; these read SSHS…SSIP and RHKS…KGGI. Over residues 209–221 the composition is skewed to polar residues; it reads DNNTNNVPKKGGI.

The protein resides in the nucleus. Its function is as follows. Transcription factor involved in yeast cell adherence to silicone substrate, filamentous growth, and biofilm formation. This is Filamentous growth regulator 27 (FGR27) from Candida albicans (strain SC5314 / ATCC MYA-2876) (Yeast).